The following is a 522-amino-acid chain: TNF receptor-associated factor 6 (522 aa).

Residues 1-354 are interaction with TAX1BP1; that stretch reads MSLLNCENSC…EAQQCNGIYI (354 aa). Residues 70-109 form an RING-type; degenerate zinc finger; it reads CPICLMALREAVQTPCGHRFCKACIIKSIRDAGHKCPVDN. Residue Lys-124 forms a Glycyl lysine isopeptide (Lys-Gly) (interchain with G-Cter in SUMO); alternate linkage. Residue Lys-124 forms a Glycyl lysine isopeptide (Lys-Gly) (interchain with G-Cter in ubiquitin); alternate linkage. Residue Lys-142 forms a Glycyl lysine isopeptide (Lys-Gly) (interchain with G-Cter in SUMO) linkage. 2 TRAF-type zinc fingers span residues 150 to 202 and 203 to 259; these read DHQA…EDKE and IHDQ…NHLA. Residues 288–348 adopt a coiled-coil conformation; that stretch reads YVSEVRNFQE…DKVAEIEAQQ (61 aa). A Glycyl lysine isopeptide (Lys-Gly) (interchain with G-Cter in ubiquitin) cross-link involves residue Lys-319. The 150-residue stretch at 350–499 folds into the MATH domain; sequence NGIYIWKIGN…DDTLLVRCEV (150 aa). An interaction with TANK region spans residues 355-522; that stretch reads WKIGNFGMHL…FQPRSTDSGV (168 aa). Residue Lys-453 forms a Glycyl lysine isopeptide (Lys-Gly) (interchain with G-Cter in SUMO) linkage.

This sequence belongs to the TNF receptor-associated factor family. A subfamily. Homotrimer. Homooligomer. N-terminal region is dimeric while C-terminal region is trimeric; maybe providing a mode of oligomerization. Upon IL1B treatment, forms a complex with PELI1, IRAK1, IRAK4 and MYD88; this complex recruits MAP3K7/TAK1, TAB1 and TAB2 to mediate NF-kappa-B activation. Direct binding of SMAD6 to PELI1 prevents the complex formation and hence negatively regulates IL1R-TLR signaling and eventually NF-kappa-B-mediated gene expression. Binds to TNFRSF5/CD40 and TNFRSF11A/RANK. Associates with NGFR, TNFRSF17, IRAK2, IRAK3, RIPK2, MAP3K1, MAP3K5, MAP3K14, CSK, TRAF, TRAF-interacting protein TRIP and TNF receptor associated protein TDP2. Interacts with IL17R. Interacts with SQSTM1 bridging NTRK1 and NGFR. Forms a ternary complex with SQSTM1 and PRKCZ. Interacts with PELI2 and PELI3. Binds UBE2V1. Interacts with TAX1BP1; this interaction mediates deubiquitination of TRAF6 and inhibition of NF-kappa-B activation. Interacts with ZNF675. Interacts with ARRB1 and ARRB2. Interacts with MAP3K7 and TAB1/MAP3K7IP1; during IL-1 signaling. Interacts with UBE2N. Interacts with TGFBR1, HDAC1 and RANGAP1. Interacts with AKT1, AKT2 and AKT3. Interacts (via TRAF domains) with NUMBL (via C-terminal). Interacts with RBCK1. Interacts with LIMD1 (via LIM domains). Interacts with RSAD2/viperin. Interacts (via C-terminus) with EIF2AK2/PKR (via the kinase catalytic domain). Interacts with ZFAND5. Interacts with IL1RL1. Interacts with TRAFD1. Interacts with AJUBA. Interacts with MAVS/IPS1. Interacts (via TRAF domains) with DYNC2I2 (via WD domains). Interacts with IFIT3 (via N-terminus). Interacts with TICAM2. Interacts with CARD14. Interacts with CD40 and MAP3K8; the interaction is required for ERK activation. Interacts with TICAM1 and this interaction is enhanced in the presence of WDFY1. Interacts with TANK; this interaction increases in response to DNA damage. Interacts with USP10; this interaction increases in response to DNA damage. Interacts with ZC3H12A; this interaction increases in response to DNA damage and is stimulated by TANK. Interacts with WDFY3. Interacts with TRIM13. Interacts with GPS2. Interacts (via C-terminus) with SASH1. Interacts with LRRC19. Interacts with IL17RA and TRAF3IP2. Interacts with TOMM70. Interacts with AMBRA1; interaction is required to mediate 'Lys-63'-linked ubiquitination of ULK1. Interacts with CRBN; this interaction inhibits TLR4-mediated signaling by preventing TRAF6-mediated ubiquitination of ECSIT. Post-translationally, sumoylated on Lys-124, Lys-142 and Lys-453 with SUMO1. Polyubiquitinated on Lys-124 by TRAF3IP2; after cell stimulation with IL17A. Polyubiquitinated on Lys-124; after cell stimulation with IL1B or TGFB. This ligand-induced cell stimulation leads to dimerization/oligomerization of TRAF6 molecules, followed by auto-ubiquitination which involves UBE2N and UBE2V1 and leads to TRAF6 activation. This 'Lys-63' site-specific poly-ubiquitination appears to be associated with the activation of signaling molecules. Deubiquitinated by USP10 in a TANK-dependent manner, leading to the negative regulation of NF-kappa-B signaling upon DNA damage. LRRC19 induces 'Lys-63' ubiquitination. Ubiquitinated at Lys-319 by the SCF(FBXL2) complex, leading to its degradation by the proteasome.

It localises to the cytoplasm. It is found in the cell cortex. Its subcellular location is the nucleus. The protein resides in the lipid droplet. The catalysed reaction is S-ubiquitinyl-[E2 ubiquitin-conjugating enzyme]-L-cysteine + [acceptor protein]-L-lysine = [E2 ubiquitin-conjugating enzyme]-L-cysteine + N(6)-ubiquitinyl-[acceptor protein]-L-lysine.. It functions in the pathway protein modification; protein ubiquitination. Its function is as follows. E3 ubiquitin ligase that, together with UBE2N and UBE2V1, mediates the synthesis of 'Lys-63'-linked-polyubiquitin chains conjugated to proteins, such as ECSIT, IKBKG, IRAK1, AKT1 and AKT2. Also mediates ubiquitination of free/unanchored polyubiquitin chain that leads to MAP3K7 activation. Leads to the activation of NF-kappa-B and JUN. Seems to also play a role in dendritic cells (DCs) maturation and/or activation. Represses c-Myb-mediated transactivation, in B-lymphocytes. Adapter protein that seems to play a role in signal transduction initiated via TNF receptor, IL-1 receptor and IL-17 receptor. Regulates osteoclast differentiation by mediating the activation of adapter protein complex 1 (AP-1) and NF-kappa-B, in response to RANK-L stimulation. Together with MAP3K8, mediates CD40 signals that activate ERK in B-cells and macrophages, and thus may play a role in the regulation of immunoglobulin production. Acts as a regulator of the JNK and NF-kappa-B signaling pathways by initiating assembly of heterotypic 'Lys-63'-/'Lys-48'-linked branched ubiquitin chains that are then recognized by TAB2: TRAF6 catalyzes initial 'Lys-63'-linked-polyubiquitin chains that are then branched via 'Lys-48'-linked polyubiquitin by HUWE1. 'Lys-63'-/'Lys-48'-linked branched ubiquitin chains protect 'Lys-63'-linkages from CYLD deubiquitination. Also participates in the TCR signaling by ubiquitinating LAT. The chain is TNF receptor-associated factor 6 (TRAF6) from Cercocebus atys (Sooty mangabey).